A 157-amino-acid polypeptide reads, in one-letter code: Cytochrome c-type biogenesis protein CcmE (157 aa).

The Cytoplasmic portion of the chain corresponds to 1-8; that stretch reads MNPLRRKR. Residues 9–29 traverse the membrane as a helical; Signal-anchor for type II membrane protein segment; that stretch reads LLIILAVLGGVGLALTLALSA. Topologically, residues 30–157 are periplasmic; it reads LKENINLFYT…ASMPARQADR (128 aa). The heme site is built by H124 and Y128. Residues 132–157 are disordered; sequence EVSKALRESGQATPAPASMPARQADR.

It belongs to the CcmE/CycJ family.

The protein localises to the cell inner membrane. Its function is as follows. Heme chaperone required for the biogenesis of c-type cytochromes. Transiently binds heme delivered by CcmC and transfers the heme to apo-cytochromes in a process facilitated by CcmF and CcmH. The chain is Cytochrome c-type biogenesis protein CcmE from Pseudomonas syringae pv. tomato (strain ATCC BAA-871 / DC3000).